The following is a 184-amino-acid chain: Inosine triphosphate pyrophosphatase (184 aa).

10–15 is a binding site for ITP; sequence TGNVKK. Glu-37 is a binding site for Mg(2+). ITP contacts are provided by residues Lys-49, 65-66, Lys-82, 141-144, Lys-164, and 169-170; these read DT, FGWD, and HR.

This sequence belongs to the HAM1 NTPase family. In terms of assembly, homodimer. Requires Mg(2+) as cofactor. It depends on Mn(2+) as a cofactor.

It is found in the cytoplasm. It carries out the reaction ITP + H2O = IMP + diphosphate + H(+). It catalyses the reaction dITP + H2O = dIMP + diphosphate + H(+). The catalysed reaction is XTP + H2O = XMP + diphosphate + H(+). Pyrophosphatase that hydrolyzes non-canonical purine nucleotides such as inosine triphosphate (ITP), deoxyinosine triphosphate (dITP) or xanthosine 5'-triphosphate (XTP) to their respective monophosphate derivatives. The enzyme does not distinguish between the deoxy- and ribose forms. Probably excludes non-canonical purines from RNA and DNA precursor pools, thus preventing their incorporation into RNA and DNA and avoiding chromosomal lesions. The chain is Inosine triphosphate pyrophosphatase from Caenorhabditis elegans.